The following is a 303-amino-acid chain: Coenzyme PQQ synthesis protein B (303 aa).

The protein belongs to the PqqB family.

It functions in the pathway cofactor biosynthesis; pyrroloquinoline quinone biosynthesis. Its function is as follows. May be involved in the transport of PQQ or its precursor to the periplasm. This is Coenzyme PQQ synthesis protein B from Acinetobacter baumannii (strain AB0057).